Reading from the N-terminus, the 371-residue chain is Cytochrome b (371 aa).

4 helical membrane-spanning segments follow: residues 25–45, 69–90, 105–125, and 170–190; these read FGSMLLTCLALQVLTGFFLAI, WMMQNLHAIGASMFFICIYIHI, WMSGITLLITLMATAFFGYVL, and FFALHFILPFAIISLSSLHII. 2 residues coordinate heme b: H75 and H89. H174 and H188 together coordinate heme b. Residue H193 coordinates a ubiquinone. 4 consecutive transmembrane segments (helical) span residues 218 to 238, 280 to 300, 312 to 332, and 339 to 358; these read HKDLLLLTFMILLLFTIVSFL, LGGALALVMSIMILFIIPFTH, LSQLMFWTLVSTFATITWAAT, and FIIISQTTSMLYFTFFLSTP.

The protein belongs to the cytochrome b family. In terms of assembly, the cytochrome bc1 complex contains 3 respiratory subunits (MT-CYB, CYC1 and UQCRFS1), 2 core proteins (UQCRC1 and UQCRC2) and probably 6 low-molecular weight proteins. Requires heme b as cofactor.

The protein localises to the mitochondrion inner membrane. Its function is as follows. Component of the ubiquinol-cytochrome c reductase complex (complex III or cytochrome b-c1 complex) that is part of the mitochondrial respiratory chain. The b-c1 complex mediates electron transfer from ubiquinol to cytochrome c. Contributes to the generation of a proton gradient across the mitochondrial membrane that is then used for ATP synthesis. In Antaresia maculosa (Eastern small blotched python), this protein is Cytochrome b (MT-CYB).